Here is a 637-residue protein sequence, read N- to C-terminus: Coiled-coil domain-containing protein 22 homolog (637 aa).

Coiled-coil stretches lie at residues Glu-322–Ala-489 and Ser-608–Asn-637.

This sequence belongs to the CCDC22 family.

This Dictyostelium discoideum (Social amoeba) protein is Coiled-coil domain-containing protein 22 homolog.